The chain runs to 251 residues: Ly6/PLAUR domain-containing protein 5 (251 aa).

Residues 1 to 25 form the signal peptide; it reads MAMGVPRVILLCLFGAALCLTGSQA. N-linked (GlcNAc...) asparagine glycans are attached at residues Asn-120 and Asn-174. Residues 135-214 form the UPAR/Ly6 domain; sequence CYACIGVHQD…GSCCEGYLCN (80 aa). Ala-225 carries the GPI-anchor amidated alanine lipid modification. The propeptide at 226-251 is removed in mature form; the sequence is SATTPPRALQVLALLLPVLLLVGLSA.

It localises to the cell membrane. The sequence is that of Ly6/PLAUR domain-containing protein 5 (LYPD5) from Homo sapiens (Human).